Here is a 326-residue protein sequence, read N- to C-terminus: Probable 9-O-acetyl-N-acetylneuraminic acid deacetylase (326 aa).

An N-terminal signal peptide occupies residues 1-21; sequence MNAIISPDYYYVLTVAGQSNA.

Its subcellular location is the periplasm. Functionally, probably catalyzes the hydrolysis of the 9-O-acetyl group of 9-O-acetyl-N-acetylneuraminate (Neu5,9Ac2). Is required for growth of E.coli on Neu5,9Ac2, an alternative sialic acid commonly found in mammalian host mucosal sites, in particular in the human intestine. The sequence is that of Probable 9-O-acetyl-N-acetylneuraminic acid deacetylase (nanS) from Escherichia coli (strain K12).